The chain runs to 450 residues: 3-phosphoshikimate 1-carboxyvinyltransferase (450 aa).

Positions 1-25 (MSAHGDPKPMTARKGGALTGTAEVP) are disordered. Residues K28, S29, and R33 each contribute to the 3-phosphoshikimate site. Residue K28 coordinates phosphoenolpyruvate. Positions 101 and 129 each coordinate phosphoenolpyruvate. 3-phosphoshikimate is bound by residues S174, Q176, D327, and K354. Q176 provides a ligand contact to phosphoenolpyruvate. The Proton acceptor role is filled by D327. Phosphoenolpyruvate-binding residues include R358 and R403.

The protein belongs to the EPSP synthase family. As to quaternary structure, monomer.

Its subcellular location is the cytoplasm. It catalyses the reaction 3-phosphoshikimate + phosphoenolpyruvate = 5-O-(1-carboxyvinyl)-3-phosphoshikimate + phosphate. The protein operates within metabolic intermediate biosynthesis; chorismate biosynthesis; chorismate from D-erythrose 4-phosphate and phosphoenolpyruvate: step 6/7. Its function is as follows. Catalyzes the transfer of the enolpyruvyl moiety of phosphoenolpyruvate (PEP) to the 5-hydroxyl of shikimate-3-phosphate (S3P) to produce enolpyruvyl shikimate-3-phosphate and inorganic phosphate. This Jannaschia sp. (strain CCS1) protein is 3-phosphoshikimate 1-carboxyvinyltransferase.